Consider the following 363-residue polypeptide: 3-isopropylmalate dehydrogenase (363 aa).

78–91 (GKRWDHLPINERPE) is a binding site for NAD(+). Residues Arg99, Arg109, Arg138, and Asp227 each contribute to the substrate site. Mg(2+) is bound by residues Asp227, Asp251, and Asp255. An NAD(+)-binding site is contributed by 285-297 (GSAPDIAGKNTAN).

The protein belongs to the isocitrate and isopropylmalate dehydrogenases family. LeuB type 1 subfamily. In terms of assembly, homodimer. It depends on Mg(2+) as a cofactor. Mn(2+) serves as cofactor.

The protein resides in the cytoplasm. It catalyses the reaction (2R,3S)-3-isopropylmalate + NAD(+) = 4-methyl-2-oxopentanoate + CO2 + NADH. The protein operates within amino-acid biosynthesis; L-leucine biosynthesis; L-leucine from 3-methyl-2-oxobutanoate: step 3/4. Functionally, catalyzes the oxidation of 3-carboxy-2-hydroxy-4-methylpentanoate (3-isopropylmalate) to 3-carboxy-4-methyl-2-oxopentanoate. The product decarboxylates to 4-methyl-2 oxopentanoate. The protein is 3-isopropylmalate dehydrogenase of Buchnera aphidicola subsp. Uroleucon helianthicola.